The following is an 862-amino-acid chain: uncharacterized protein (862 aa).

An N-terminal signal peptide occupies residues 1-25 (MKPRPYSVFLFLHIVFYSLLSAVNG). Topologically, residues 26–61 (SPSLDYFETCSNFVPRAGIPTFSPYAVIKNFDEVNR) are lumenal. Residues 62-82 (MYYIQVVGNLSGVITIVGGNG) traverse the membrane as a helical segment. The Cytoplasmic segment spans residues 83-187 (SHIHAASVYS…STTLYYFYPV (105 aa)). The chain crosses the membrane as a helical span at residues 188-208 (ISYLVVVSLAYVSFSIIYALF). Topologically, residues 209–230 (LNPWTGSLDPFKSIFNFNMDPD) are lumenal. A helical membrane pass occupies residues 231–250 (ALRLTSLGFFDFVQYLQFAV). Residues 251-256 (STAQVS) lie on the Cytoplasmic side of the membrane. Residues 257 to 277 (VMFPKFYINIMAALSWGTALF) traverse the membrane as a helical segment. At 278–329 (RFPIFSEPAEYQFADFADLSVASSSYADYLPKSYGMYSFLDSIGIGTACWLP) the chain is on the lumenal side. The helical transmembrane segment at 330 to 350 (FLIVMVIYLFAALFVALLVIF) threads the bilayer. The Cytoplasmic portion of the chain corresponds to 351–372 (LKWLMSRIFNETIAETRWDTWS). A helical membrane pass occupies residues 373 to 393 (FIAGSLIRLYFLTYFPTVAYM). The Lumenal portion of the chain corresponds to 394–404 (SFQFVAPPTGY). A helical membrane pass occupies residues 405-425 (EIIPVLWFIFFGIFIPVYLYM). Residues 426 to 457 (NLAFVEPSSKLLEDQTYLHLFGSIYNSFREER) are Cytoplasmic-facing. A helical transmembrane segment spans residues 458 to 480 (VMFWIFPIAVQFMRGITVGVIGS). At 481 to 483 (SGS) the chain is on the lumenal side. Residues 484–503 (AQLAIFFILEVANVVAYAYV) traverse the membrane as a helical segment. Topologically, residues 504–514 (RPHFPQTSMNT) are cytoplasmic. The helical transmembrane segment at 515-535 (LNTFISTMRLITVILMIPLDP) threads the bilayer. The Lumenal segment spans residues 536–545 (RLKVLGISRD). The chain crosses the membrane as a helical span at residues 546–566 (LLAYAILFIHIMVCILFLLLS). At 567-862 (TQRFMEVSAR…AESAWSIPHP (296 aa)) the chain is on the cytoplasmic side. A compositionally biased stretch (polar residues) spans 668–686 (QASSLVPSKNNTASSSSLM). 2 disordered regions span residues 668–717 (QASS…SVRK) and 815–862 (VLRS…IPHP). The span at 689 to 700 (SPVTPSSPYSTS) shows a compositional bias: low complexity. Positions 834 to 850 (EPSRDEQYSMERKKTDD) are enriched in basic and acidic residues.

The protein belongs to the transient receptor potential (TRP) ion channel family.

The protein resides in the cytoplasm. It localises to the golgi apparatus membrane. This is an uncharacterized protein from Schizosaccharomyces pombe (strain 972 / ATCC 24843) (Fission yeast).